The following is a 111-amino-acid chain: UPF0125 protein SO_1475 (111 aa).

Residues 88–111 (VRRRRADKAKDEGRANKVTGGRVS) are disordered.

It belongs to the UPF0125 (RnfH) family.

The sequence is that of UPF0125 protein SO_1475 from Shewanella oneidensis (strain ATCC 700550 / JCM 31522 / CIP 106686 / LMG 19005 / NCIMB 14063 / MR-1).